A 409-amino-acid chain; its full sequence is Arginine deiminase (409 aa).

Cys-399 functions as the Amidino-cysteine intermediate in the catalytic mechanism.

This sequence belongs to the arginine deiminase family.

Its subcellular location is the cytoplasm. It carries out the reaction L-arginine + H2O = L-citrulline + NH4(+). Its pathway is amino-acid degradation; L-arginine degradation via ADI pathway; carbamoyl phosphate from L-arginine: step 1/2. In Borrelia recurrentis (strain A1), this protein is Arginine deiminase.